Reading from the N-terminus, the 518-residue chain is Ethanolamine kinase (518 aa).

A compositionally biased stretch (polar residues) spans 1–19 (MGTETKSNSYTGQISTSGG). Positions 1 to 88 (MGTETKSNSY…DIRAKPEDKS (88 aa)) are disordered. Positions 33-68 (QTVNQQTLSLSQSNQVQNQLNSHSNSNSYPNPSGSE) are enriched in low complexity. Residues 69–88 (NKNENEQNSRDIRAKPEDKS) are compositionally biased toward basic and acidic residues. 2 positions are modified to phosphoserine: S190 and S194.

This sequence belongs to the choline/ethanolamine kinase family.

It is found in the cytoplasm. It carries out the reaction ethanolamine + ATP = phosphoethanolamine + ADP + H(+). It participates in phospholipid metabolism; phosphatidylethanolamine biosynthesis; phosphatidylethanolamine from ethanolamine: step 1/3. In terms of biological role, highly specific for ethanolamine phosphorylation. May be a rate-controlling step in phosphatidylethanolamine biosynthesis. This is Ethanolamine kinase (eas) from Drosophila melanogaster (Fruit fly).